Consider the following 728-residue polypeptide: FAD-dependent monooxygenase avaB (728 aa).

The chain crosses the membrane as a helical span at residues Val-17–Lys-37. The segment covering Asn-50 to Gln-64 has biased composition (polar residues). Residues Asn-50–Thr-72 form a disordered region. Val-168 is a binding site for FAD. An NADP(+)-binding site is contributed by Asp-490–Leu-491.

Belongs to the FAD-binding monooxygenase family. It depends on FAD as a cofactor.

The protein localises to the membrane. The protein operates within secondary metabolite metabolism. In terms of biological role, multifunctional FAD-dependent monooxygenase; part of the cluster that mediates the biosynthesis of a highly modified cyclo-arginine-tryptophan dipeptide (cRW). Within the pathway, avaB uses the avaA cyclo-arginine-tryptophan dipeptide (cRW) as substrate to generate the cyclo-Arg-formylkynurenine diketopiperazine (DKP). AvaB also catalyzes an additional N-oxidation of the avaC product which is followed by cyclization and dehydration. The first step of the pathway is perfornmed by the arginine-containing cyclodipeptide synthase (RCPDS) avaA that acts as the scaffold-generating enzyme and is responsible for formation of the cyclo-Arg-Trp (cRW) diketopiperazine. AvaB then acts as a multifunctional flavoenzyme that is responsible for generating the cyclo-Arg-formylkynurenine DKP, which can be deformylated by avaC. AvaB then further catalyzes an additional N-oxidation followed by cyclization and dehydration. The next step is an N-acetylation of the guanidine group catalyzed by the arginine N-acetyltransferase avaD. The roles of the additional enzymes identified within the ava cluster still have to be determined. In Aspergillus versicolor, this protein is FAD-dependent monooxygenase avaB.